The sequence spans 79 residues: Conotoxin ArMSGL-0121 (79 aa).

The first 20 residues, 1-20, serve as a signal peptide directing secretion; sequence MSRLGIMVLTLLLLVFIVTS. Positions 21–44 are excised as a propeptide; that stretch reads HQDAGEKQATQRNAINFRWRRSFT. Disulfide bonds link Cys-52/Cys-64, Cys-56/Cys-73, and Cys-63/Cys-77. At Leu-78 the chain carries Leucine amide.

It belongs to the conotoxin O3 superfamily. Expressed by the venom duct.

The protein localises to the secreted. The protein is Conotoxin ArMSGL-0121 of Conus arenatus (Sand-dusted cone).